A 749-amino-acid polypeptide reads, in one-letter code: Putative Xaa-Pro aminopeptidase FRA1 (749 aa).

The tract at residues 1-33 is disordered; the sequence is MTSKPSTSDGRAHSISHVPGTHMRGTSASHSPR. Residues S69, S92, and S95 each carry the phosphoserine modification. Mn(2+) contacts are provided by D551, D562, E660, and E674.

It belongs to the peptidase M24B family. Homodimer. Interacts with FRA2. The cofactor is Mn(2+).

The protein localises to the cytoplasm. The catalysed reaction is Release of any N-terminal amino acid, including proline, that is linked to proline, even from a dipeptide or tripeptide.. Functionally, involved in the regulation of the iron regulon in responss to decreased mitochondrial iron-sulfur cluster synthesis. The sequence is that of Putative Xaa-Pro aminopeptidase FRA1 (FRA1) from Saccharomyces cerevisiae (strain ATCC 204508 / S288c) (Baker's yeast).